Here is a 763-residue protein sequence, read N- to C-terminus: Phospholipid phosphatase-related protein type 4 (763 aa).

The segment at 33–54 (VHTSPGGGRRPGQAAGMSAKER) is disordered. A Phosphoserine modification is found at Ser36. A run of 3 helical transmembrane segments spans residues 67–87 (LPCF…SLYF), 119–139 (AIPF…TIMV), and 178–198 (FVGV…IIQL). 2 N-linked (GlcNAc...) asparagine glycosylation sites follow: Asn214 and Asn219. The chain crosses the membrane as a helical span at residues 247-267 (SFPSQHATLAAFAAVYVSMYF). Asn268 is a glycosylation site (N-linked (GlcNAc...) asparagine). The next 2 helical transmembrane spans lie at 276–296 (KLLK…CGLT) and 308–328 (VYCG…YAVG). Ser346 is modified (phosphoserine). A glycan (N-linked (GlcNAc...) asparagine) is linked at Asn362. At Ser385 the chain carries Phosphoserine. N-linked (GlcNAc...) asparagine glycosylation is present at Asn432. Ser438 carries the post-translational modification Phosphoserine. N-linked (GlcNAc...) asparagine glycosylation occurs at Asn455. A disordered region spans residues 458 to 529 (RKLSLQVIEP…PRVSIQSRPG (72 aa)). Residues Ser461 and Ser472 each carry the phosphoserine modification. 3 N-linked (GlcNAc...) asparagine glycosylation sites follow: Asn513, Asn543, and Asn568. Phosphoserine is present on Ser606. A compositionally biased stretch (basic and acidic residues) spans 669–694 (DSESCESLKDSFGSGDRKRSNIDSNE). Disordered stretches follow at residues 669-698 (DSES…HHHH) and 739-763 (ERSN…AYKD). Residues 740-749 (RSNSPENTRN) are compositionally biased toward polar residues.

Belongs to the PA-phosphatase related phosphoesterase family. O-glycosylated. Probably at Ser-346. Expressed by glutamatergic neurons (at protein level).

It is found in the postsynaptic density membrane. Functionally, postsynaptic density membrane protein that indirectly regulates glutamatergic synaptic transmission through lysophosphatidic acid (LPA)-mediated signaling pathways. Binds lysophosphatidic acid (LPA) and mediates its internalization into cells. Could act as receptor or a transporter of this lipid at the post-synaptic membrane. Modulates lysophosphatidic acid (LPA) activity in neuron axonal outgrowth during development by attenuating phospholipid-induced axon collapse. The chain is Phospholipid phosphatase-related protein type 4 from Homo sapiens (Human).